The primary structure comprises 536 residues: Caspase recruitment domain-containing protein 9 (536 aa).

The residue at position 2 (Ser2) is a Phosphoserine. Zn(2+)-binding residues include Asp3, Cys10, and His73. Residues 6–98 (NDDECWSTLE…QLYRKVTGKE (93 aa)) enclose the CARD domain. The linker stretch occupies residues 99–116 (PARVFSMIIDASGESGLT). Residues 117-272 (QLLMTEVMKL…ELQVSVQEGK (156 aa)) are a coiled coil. A Glycyl lysine isopeptide (Lys-Gly) (interchain with G-Cter in ubiquitin) cross-link involves residue Lys125. Thr231 carries the phosphothreonine; by PKC/PRKCD modification. Residue Ser277 is modified to Phosphoserine. The stretch at 303 to 415 (SLRKDLRQAE…LLAAEGRLKQ (113 aa)) forms a coiled coil. 7 positions are modified to phosphoserine: Ser424, Ser425, Ser431, Ser451, Ser461, Ser483, and Ser498. The segment at 425-451 (SDLEDSSPRNSQELSLPQDLEEDAQLS) is disordered. Residues 476–536 (LTHGMGPSSS…GSDNTDTEGS (61 aa)) form a disordered region. Residues 487–502 (PPEKERRRLKESFENY) are compositionally biased toward basic and acidic residues. Phosphothreonine; by CK2 occurs at positions 531 and 533.

Monomer. Homodimer; homodimerization is mediated by the CARD domain which forms an extensive interaction with the adjacent linker and coiled-coil regions; leads to an autoinhibited state. Homomultimer; polymerizes following activation, forming a nucleating helical template that seeds BCL10-filament formation via a CARD-CARD interaction. Interacts (via CARD domain) with BCL10 (via CARD domain); interaction takes place following CARD9 activation and polymerization, leading to the formation of a filamentous CBM complex assembly. Component of a CBM complex (CARD9-BCL10, MALT1), composed of CARD9, BCL10 and MALT1. Interacts with RASGRF1. Interacts with NOD2 (via NACHT domain); interaction is direct. Interacts with RIPK2. Interacts with VHL; without leading to protein degradation. In terms of processing, phosphorylated at Thr-231 by PRKCD downstream of C-type lectin receptors activation: phosphorylation promotes interaction with BCL10, followed by activation of NF-kappa-B and MAP kinase p38 pathways. Phosphorylated at Thr-531 and Thr-531 by CK2 following interaction with VHL, leading to inhibit the ability to activate NF-kappa-B. Ubiquitinated at Lys-125 via 'Lys-27'-linked ubiquitin by TRIM62 downstream of C-type lectin receptors activation; leading to CARD9 activation, followed by activation of NF-kappa-B and MAP kinase p38 pathways. Deubiquitinated at Lys-125 by USP15, inhibiting CARD9. As to expression, specifically expressed in myeloid cells. Not expressed in non-lymphoid organs.

It is found in the cytoplasm. Maintained in an autoinhibited state via homodimerization in which the CARD domain forms an extensive interaction with the adjacent linker and coiled-coil regions. Activation downstream of C-type lectin receptors, by phosphorylation by PRKCD and/or ubiquitination by TRIM62, triggers disruption of the CARD domain-coiled coil interface, CARD9 homooligomerization and BCL10 recruitment, followed by activation of NF-kappa-B and MAP kinase p38 pathways. Zinc-binding inhibits activation by stabilizing the CARD ground-state conformation and restricting its capacity to form BCL10-nucleating filaments. Its function is as follows. Adapter protein that plays a key role in innate immune response against fungi by forming signaling complexes downstream of C-type lectin receptors. CARD9-mediated signals are essential for antifungal immunity against a subset of fungi from the phylum Ascomycota. Transduces signals in myeloid cells downstream of C-type lectin receptors CLEC7A (dectin-1), CLEC6A (dectin-2) and CLEC4E (Mincle), which detect pathogen-associated molecular pattern metabolites (PAMPs), such as fungal carbohydrates, and trigger CARD9 activation. Upon activation, CARD9 homooligomerizes to form a nucleating helical template that recruits BCL10 via CARD-CARD interaction, thereby promoting polymerization of BCL10 and subsequent recruitment of MALT1: this leads to activation of NF-kappa-B and MAP kinase p38 (MAPK11, MAPK12, MAPK13 and/or MAPK14) pathways which stimulate expression of genes encoding pro-inflammatory cytokines and chemokines. CARD9 signaling in antigen-presenting cells links innate sensing of fungi to the activation of adaptive immunity and provides a cytokine milieu that induces the development and subsequent of interleukin 17-producing T helper (Th17) cells. Also involved in activation of myeloid cells via classical ITAM-associated receptors and TLR: required for TLR-mediated activation of MAPK, while it is not required for TLR-induced activation of NF-kappa-B. CARD9 can also be engaged independently of BCL10: forms a complex with RASGRF1 downstream of C-type lectin receptors, which recruits and activates HRAS, leading to ERK activation and the production of cytokines. Acts as an important regulator of the intestinal commensal fungi (mycobiota) component of the gut microbiota. Plays an essential role in antifungal immunity against dissemination of gut fungi: acts by promoting induction of antifungal IgG antibodies response in CX3CR1(+) macrophages to confer protection against disseminated C.albicans or C.auris infection. Also mediates immunity against other pathogens, such as certain bacteria, viruses and parasites; CARD9 signaling is however redundant with other innate immune responses. In response to L.monocytogenes infection, required for the production of inflammatory cytokines activated by intracellular peptidoglycan: acts by connecting NOD2 recognition of peptidoglycan to downstream activation of MAP kinases (MAPK) without activating NF-kappa-B. The polypeptide is Caspase recruitment domain-containing protein 9 (Mus musculus (Mouse)).